Here is a 340-residue protein sequence, read N- to C-terminus: Heat-inducible transcription repressor HrcA (340 aa).

This sequence belongs to the HrcA family.

Its function is as follows. Negative regulator of class I heat shock genes (grpE-dnaK-dnaJ and groELS operons). Prevents heat-shock induction of these operons. This is Heat-inducible transcription repressor HrcA from Phytoplasma australiense.